The following is a 292-amino-acid chain: NAD kinase (292 aa).

D73 (proton acceptor) is an active-site residue. NAD(+)-binding positions include 73–74 (DG), 147–148 (NE), H158, R175, D177, 188–193 (TGYSLS), and Q248.

Belongs to the NAD kinase family. It depends on a divalent metal cation as a cofactor.

The protein localises to the cytoplasm. The enzyme catalyses NAD(+) + ATP = ADP + NADP(+) + H(+). Its function is as follows. Involved in the regulation of the intracellular balance of NAD and NADP, and is a key enzyme in the biosynthesis of NADP. Catalyzes specifically the phosphorylation on 2'-hydroxyl of the adenosine moiety of NAD to yield NADP. In Buchnera aphidicola subsp. Baizongia pistaciae (strain Bp), this protein is NAD kinase.